The sequence spans 169 residues: T-cell receptor gamma chain C region DFL12 (169 aa).

The c region stretch occupies residues 1–136 (PSDKRLDADI…LQFMSTSAYY (136 aa)). Residues 137–157 (TYLLLLLKSVIYLAIISFSLL) form a helical membrane-spanning segment. Over 158–169 (RRTSVCCNEKRS) the chain is Cytoplasmic.

It localises to the membrane. This Mus musculus (Mouse) protein is T-cell receptor gamma chain C region DFL12.